Reading from the N-terminus, the 406-residue chain is Probable tRNA sulfurtransferase (406 aa).

The 107-residue stretch at 60–166 folds into the THUMP domain; it reads EPVMERLKQV…LNGIYLTSAK (107 aa). ATP is bound by residues 184–185, 209–210, Arg266, Gly288, and Gln297; these read ML and HF.

This sequence belongs to the ThiI family.

It is found in the cytoplasm. The enzyme catalyses [ThiI sulfur-carrier protein]-S-sulfanyl-L-cysteine + a uridine in tRNA + 2 reduced [2Fe-2S]-[ferredoxin] + ATP + H(+) = [ThiI sulfur-carrier protein]-L-cysteine + a 4-thiouridine in tRNA + 2 oxidized [2Fe-2S]-[ferredoxin] + AMP + diphosphate. It catalyses the reaction [ThiS sulfur-carrier protein]-C-terminal Gly-Gly-AMP + S-sulfanyl-L-cysteinyl-[cysteine desulfurase] + AH2 = [ThiS sulfur-carrier protein]-C-terminal-Gly-aminoethanethioate + L-cysteinyl-[cysteine desulfurase] + A + AMP + 2 H(+). It functions in the pathway cofactor biosynthesis; thiamine diphosphate biosynthesis. Its function is as follows. Catalyzes the ATP-dependent transfer of a sulfur to tRNA to produce 4-thiouridine in position 8 of tRNAs, which functions as a near-UV photosensor. Also catalyzes the transfer of sulfur to the sulfur carrier protein ThiS, forming ThiS-thiocarboxylate. This is a step in the synthesis of thiazole, in the thiamine biosynthesis pathway. The sulfur is donated as persulfide by IscS. In Limosilactobacillus fermentum (strain NBRC 3956 / LMG 18251) (Lactobacillus fermentum), this protein is Probable tRNA sulfurtransferase.